A 253-amino-acid polypeptide reads, in one-letter code: tRNA uridine(34) hydroxylase (253 aa).

Residues 127-221 (HGRPLVLLDT…YFEDVGGEGY (95 aa)) form the Rhodanese domain. C181 (cysteine persulfide intermediate) is an active-site residue.

It belongs to the TrhO family.

It catalyses the reaction uridine(34) in tRNA + AH2 + O2 = 5-hydroxyuridine(34) in tRNA + A + H2O. Functionally, catalyzes oxygen-dependent 5-hydroxyuridine (ho5U) modification at position 34 in tRNAs. This is tRNA uridine(34) hydroxylase from Xanthomonas campestris pv. campestris (strain 8004).